The sequence spans 353 residues: Photosystem II D2 protein (353 aa).

Thr2 carries the post-translational modification N-acetylthreonine. At Thr2 the chain carries Phosphothreonine. Residues 41–61 (CAYFALGGWFTGTTFVTSWYT) traverse the membrane as a helical segment. His118 contacts chlorophyll a. Residues 125 to 141 (GFMLRQFELARSVQLRP) form a helical membrane-spanning segment. Residues Gln130 and Asn143 each coordinate pheophytin a. Residues 153 to 166 (VFVSVFLIYPLGQS) traverse the membrane as a helical segment. His198 serves as a coordination point for chlorophyll a. A helical membrane pass occupies residues 208-228 (AALLCAIHGATVENTLFEDGD). A plastoquinone-binding residues include His215 and Phe262. Residue His215 coordinates Fe cation. His269 lines the Fe cation pocket. A helical membrane pass occupies residues 279 to 295 (GLWMSALGVVGLALNLR).

Belongs to the reaction center PufL/M/PsbA/D family. As to quaternary structure, PSII is composed of 1 copy each of membrane proteins PsbA, PsbB, PsbC, PsbD, PsbE, PsbF, PsbH, PsbI, PsbJ, PsbK, PsbL, PsbM, PsbT, PsbX, PsbY, PsbZ, Psb30/Ycf12, at least 3 peripheral proteins of the oxygen-evolving complex and a large number of cofactors. It forms dimeric complexes. The cofactor is The D1/D2 heterodimer binds P680, chlorophylls that are the primary electron donor of PSII, and subsequent electron acceptors. It shares a non-heme iron and each subunit binds pheophytin, quinone, additional chlorophylls, carotenoids and lipids. There is also a Cl(-1) ion associated with D1 and D2, which is required for oxygen evolution. The PSII complex binds additional chlorophylls, carotenoids and specific lipids..

It localises to the plastid. The protein localises to the chloroplast thylakoid membrane. The enzyme catalyses 2 a plastoquinone + 4 hnu + 2 H2O = 2 a plastoquinol + O2. Photosystem II (PSII) is a light-driven water:plastoquinone oxidoreductase that uses light energy to abstract electrons from H(2)O, generating O(2) and a proton gradient subsequently used for ATP formation. It consists of a core antenna complex that captures photons, and an electron transfer chain that converts photonic excitation into a charge separation. The D1/D2 (PsbA/PsbD) reaction center heterodimer binds P680, the primary electron donor of PSII as well as several subsequent electron acceptors. D2 is needed for assembly of a stable PSII complex. The protein is Photosystem II D2 protein of Morus indica (Mulberry).